The chain runs to 114 residues: As-peptide 126 (114 aa).

Residues 1–22 (MSRALICSLALLAMLVISGTYA) form the signal peptide. 9 repeat units span residues 22 to 29 (ASPAANAE), 30 to 37 (ALAAANAE), 38 to 45 (ASAAANAE), 46 to 53 (PLAAANAE), 54 to 61 (PLAAANAE), 62 to 69 (PLAAANAD), 70 to 77 (PIAAANAE), 78 to 85 (PSAAANAE), and 86 to 93 (PLAAANAE). The tract at residues 22-93 (ASPAANAEAL…AEPLAAANAE (72 aa)) is 9 X 8 AA approximate tandem repeats of [AP]-[ILS]-[AP]-A-A-N-A-[DE]. A propeptide spanning residues 23 to 104 (SPAANAEALA…SAGPSPLAAA (82 aa)) is cleaved from the precursor. Low complexity predominate over residues 82–96 (ANAEPLAAANAEPSA). The disordered stretch occupies residues 82 to 114 (ANAEPLAAANAEPSAGPSPLAAAQDPPVVKMKG). The residue at position 105 (Gln105) is a Pyrrolidone carboxylic acid. The residue at position 113 (Lys113) is a Lysine amide.

As to expression, expressed by the venom gland.

It is found in the secreted. The chain is As-peptide 126 from Anoplius samariensis (Solitary wasp).